The chain runs to 116 residues: Large ribosomal subunit protein bL19 (116 aa).

The protein belongs to the bacterial ribosomal protein bL19 family.

In terms of biological role, this protein is located at the 30S-50S ribosomal subunit interface and may play a role in the structure and function of the aminoacyl-tRNA binding site. This Roseiflexus castenholzii (strain DSM 13941 / HLO8) protein is Large ribosomal subunit protein bL19.